Reading from the N-terminus, the 332-residue chain is Malate dehydrogenase, cytoplasmic (332 aa).

NAD(+) is bound by residues 16–17, D43, and G90; that span reads QI. Residue R99 participates in oxaloacetate binding. NAD(+) contacts are provided by Q113 and N132. The oxaloacetate site is built by N132, R163, H188, and S243. H188 acts as the Proton acceptor in catalysis.

It belongs to the LDH/MDH superfamily. MDH type 2 family. As to quaternary structure, monomer. Expressed constitutively in roots.

The protein localises to the cell membrane. The catalysed reaction is (S)-malate + NAD(+) = oxaloacetate + NADH + H(+). In terms of biological role, malate dehydrogenase; catalyzes a reversible NAD-dependent dehydrogenase reaction involved in central metabolism and redox homeostasis. The protein is Malate dehydrogenase, cytoplasmic of Zea mays (Maize).